Here is a 149-residue protein sequence, read N- to C-terminus: Arginine repressor (149 aa).

It belongs to the ArgR family.

The protein localises to the cytoplasm. It functions in the pathway amino-acid biosynthesis; L-arginine biosynthesis [regulation]. Functionally, regulates arginine biosynthesis genes. The protein is Arginine repressor of Listeria welshimeri serovar 6b (strain ATCC 35897 / DSM 20650 / CCUG 15529 / CIP 8149 / NCTC 11857 / SLCC 5334 / V8).